The primary structure comprises 271 residues: Phosphate import ATP-binding protein PstB (271 aa).

One can recognise an ABC transporter domain in the interval valine 25 to isoleucine 266. Glycine 57 to serine 64 provides a ligand contact to ATP.

Belongs to the ABC transporter superfamily. Phosphate importer (TC 3.A.1.7) family. As to quaternary structure, the complex is composed of two ATP-binding proteins (PstB), two transmembrane proteins (PstC and PstA) and a solute-binding protein (PstS).

The protein localises to the cell inner membrane. The catalysed reaction is phosphate(out) + ATP + H2O = ADP + 2 phosphate(in) + H(+). Functionally, part of the ABC transporter complex PstSACB involved in phosphate import. Responsible for energy coupling to the transport system. The sequence is that of Phosphate import ATP-binding protein PstB from Thermus thermophilus (strain ATCC BAA-163 / DSM 7039 / HB27).